Here is a 250-residue protein sequence, read N- to C-terminus: Acetylglutamate kinase (250 aa).

Residues 41 to 42 (GG), R63, and N156 contribute to the substrate site.

It belongs to the acetylglutamate kinase family. ArgB subfamily.

It is found in the cytoplasm. It carries out the reaction N-acetyl-L-glutamate + ATP = N-acetyl-L-glutamyl 5-phosphate + ADP. The protein operates within amino-acid biosynthesis; L-arginine biosynthesis; N(2)-acetyl-L-ornithine from L-glutamate: step 2/4. In terms of biological role, catalyzes the ATP-dependent phosphorylation of N-acetyl-L-glutamate. This Listeria monocytogenes serovar 1/2a (strain ATCC BAA-679 / EGD-e) protein is Acetylglutamate kinase.